Here is a 185-residue protein sequence, read N- to C-terminus: ATP-dependent protease subunit HslV (185 aa).

Residue threonine 12 is part of the active site. 3 residues coordinate Na(+): alanine 168, cysteine 171, and threonine 174.

This sequence belongs to the peptidase T1B family. HslV subfamily. In terms of assembly, a double ring-shaped homohexamer of HslV is capped on each side by a ring-shaped HslU homohexamer. The assembly of the HslU/HslV complex is dependent on binding of ATP.

Its subcellular location is the cytoplasm. The catalysed reaction is ATP-dependent cleavage of peptide bonds with broad specificity.. Its activity is regulated as follows. Allosterically activated by HslU binding. In terms of biological role, protease subunit of a proteasome-like degradation complex believed to be a general protein degrading machinery. In Roseobacter denitrificans (strain ATCC 33942 / OCh 114) (Erythrobacter sp. (strain OCh 114)), this protein is ATP-dependent protease subunit HslV.